We begin with the raw amino-acid sequence, 463 residues long: Ribosomal protein uS12 methylthiotransferase RimO (463 aa).

An MTTase N-terminal domain is found at 15-130 (PKVGMVSLGC…VMQVVHSHLP (116 aa)). Cys-24, Cys-60, Cys-89, Cys-161, Cys-165, and Cys-168 together coordinate [4Fe-4S] cluster. The Radical SAM core domain maps to 147-392 (LTPRHYAYLK…MEVAEEVSAA (246 aa)). A TRAM domain is found at 395-463 (ERKVGKTLKV…ADGHDLWGEV (69 aa)).

This sequence belongs to the methylthiotransferase family. RimO subfamily. It depends on [4Fe-4S] cluster as a cofactor.

The protein resides in the cytoplasm. It catalyses the reaction L-aspartate(89)-[ribosomal protein uS12]-hydrogen + (sulfur carrier)-SH + AH2 + 2 S-adenosyl-L-methionine = 3-methylsulfanyl-L-aspartate(89)-[ribosomal protein uS12]-hydrogen + (sulfur carrier)-H + 5'-deoxyadenosine + L-methionine + A + S-adenosyl-L-homocysteine + 2 H(+). In terms of biological role, catalyzes the methylthiolation of an aspartic acid residue of ribosomal protein uS12. The sequence is that of Ribosomal protein uS12 methylthiotransferase RimO from Burkholderia thailandensis (strain ATCC 700388 / DSM 13276 / CCUG 48851 / CIP 106301 / E264).